Here is a 128-residue protein sequence, read N- to C-terminus: Secreted RxLR effector protein RXLR-C09 (128 aa).

The signal sequence occupies residues 1-22; sequence MRFCLVFIRLAAFVILSGGATS. Positions 58 to 75 match the RxLR-dEER motif; it reads RLLRLNDQADISGHDEER.

This sequence belongs to the RxLR effector family.

The protein resides in the secreted. Its subcellular location is the host cell membrane. The protein localises to the host nucleus. Secreted effector that suppresses pattern-triggered immunity (PTI) in plant host. The polypeptide is Secreted RxLR effector protein RXLR-C09 (Plasmopara halstedii (Downy mildew of sunflower)).